The sequence spans 452 residues: Trigger factor (452 aa).

In terms of domain architecture, PPIase FKBP-type spans 162–247 (GDTVTIDYKG…IHEVKSKQLP (86 aa)). The segment at 427–452 (AKAKLEAKEAEEAEDKEEAEDKKENK) is disordered.

Belongs to the FKBP-type PPIase family. Tig subfamily.

Its subcellular location is the cytoplasm. The catalysed reaction is [protein]-peptidylproline (omega=180) = [protein]-peptidylproline (omega=0). In terms of biological role, involved in protein export. Acts as a chaperone by maintaining the newly synthesized protein in an open conformation. Functions as a peptidyl-prolyl cis-trans isomerase. In Lactobacillus helveticus (strain DPC 4571), this protein is Trigger factor.